We begin with the raw amino-acid sequence, 237 residues long: uncharacterized protein (237 aa).

The Response regulatory domain maps to 3–116 (SALLIDDERF…RLAKTVQRLL (114 aa)). A 4-aspartylphosphate modification is found at Asp-54. Residues 135 to 236 (IPCTGLNRIV…LKELKEMLGF (102 aa)) form the HTH LytTR-type domain.

This is an uncharacterized protein from Vibrio cholerae serotype O1 (strain ATCC 39315 / El Tor Inaba N16961).